The chain runs to 245 residues: Orotidine 5'-phosphate decarboxylase (245 aa).

Residues Asp22, Lys44, Asp71 to Thr80, Thr131, Arg192, Gln201, Gly221, and Arg222 each bind substrate. Catalysis depends on Lys73, which acts as the Proton donor.

It belongs to the OMP decarboxylase family. Type 1 subfamily. In terms of assembly, homodimer.

It carries out the reaction orotidine 5'-phosphate + H(+) = UMP + CO2. It participates in pyrimidine metabolism; UMP biosynthesis via de novo pathway; UMP from orotate: step 2/2. Its function is as follows. Catalyzes the decarboxylation of orotidine 5'-monophosphate (OMP) to uridine 5'-monophosphate (UMP). This Escherichia coli O81 (strain ED1a) protein is Orotidine 5'-phosphate decarboxylase.